Here is a 318-residue protein sequence, read N- to C-terminus: DNA repair nuclease/redox regulator APEX1 (318 aa).

The segment at 1–33 (MPKRGKKGAVAEDGDELKTEPEAKKSKTAAKKN) is necessary for interaction with YBX1, binding to RNA, association together with NPM1 to rRNA, endoribonuclease activity on abasic RNA and localization in the nucleoli. Positions 1–60 (MPKRGKKGAVAEDGDELKTEPEAKKSKTAAKKNDKEAAGEGPALYEDPPDQKTSPSGKPA) are disordered. 2 positions are modified to N6-acetyllysine; by EP300: Lys-6 and Lys-7. A Nuclear localization signal (NLS) motif is present at residues 8-13 (GAVAED). Residues 16–38 (ELKTEPEAKKSKTAAKKNDKEAA) are compositionally biased toward basic and acidic residues. The interval 23–33 (AKKSKTAAKKN) is necessary for interaction with NPM1 and for efficient rRNA binding. Residues Lys-27, Lys-31, Lys-32, and Lys-35 each carry the N6-acetyllysine modification. Ser-54 carries the post-translational modification Phosphoserine. Positions 64-80 (ICSWNVDGLRAWIKKKG) match the Nuclear export signal (NES) motif. S-nitrosocysteine; alternate is present on Cys-65. Residues Cys-65 and Cys-93 are joined by a disulfide bond. Mg(2+) is bound at residue Asp-70. Cys-93 carries the S-nitrosocysteine; alternate modification. Glu-96 provides a ligand contact to Mg(2+). Residue Tyr-171 is part of the active site. Lys-197 bears the N6-acetyllysine mark. Mg(2+)-binding residues include Asp-210 and Asn-212. The active-site Proton donor/acceptor is the Asp-210. Phosphothreonine; by CDK5 is present on Thr-233. Residues 289 to 318 (HSLLPALCDSKIRSKALGSDHCPITLYLAL) form a mitochondrial targeting sequence (MTS) region. Asp-308 is a Mg(2+) binding site. At Cys-310 the chain carries S-nitrosocysteine.

Belongs to the DNA repair enzymes AP/ExoA family. In terms of assembly, monomer. Homodimer; disulfide-linked. Component of the SET complex, composed of at least APEX1, SET, ANP32A, HMGB2, NME1 and TREX1. Associates with the dimer XRCC5/XRCC6 in a DNA-dependent manner. Interacts with SIRT1; the interaction is increased in the context of genotoxic stress. Interacts with HDAC1, HDAC2 and HDAC3; the interactions are not dependent on the APEX1 acetylation status. Interacts with XRCC1; the interaction is induced by SIRT1 and increased with the APEX1 acetylated form. Interacts with NPM1 (via N-terminal domain); the interaction is RNA-dependent and decreases in hydrogen peroxide-damaged cells. Interacts (via N-terminus) with YBX1 (via C-terminus); the interaction is increased in presence of APEX1 acetylated at Lys-6 and Lys-7. Interacts with HNRNPL; the interaction is DNA-dependent. Interacts (via N-terminus) with KPNA1 and KPNA2. Interacts with TXN; the interaction stimulates the FOS/JUN AP-1 complex DNA-binding activity in a redox-dependent manner. Interacts with GZMA, KRT8, MDM2, POLB, PRDX6, PRPF19, RPLP0, TOMM20 and WDR77. Binds to CDK5. Mg(2+) serves as cofactor. It depends on Mn(2+) as a cofactor. In terms of processing, phosphorylated. Phosphorylation by kinase PKC or casein kinase CK2 results in enhanced redox activity that stimulates binding of the FOS/JUN AP-1 complex to its cognate binding site. AP-endodeoxyribonuclease activity is not affected by CK2-mediated phosphorylation. Phosphorylation of Thr-233 by CDK5 in response to MPP(+)/MPTP (1-methyl-4-phenylpyridinium) reduces AP-endodeoxyribonuclease activity resulting in accumulation of DNA damage and contributing to neuronal death. Acetylated on Lys-6 and Lys-7. Acetylation is increased by the transcriptional coactivator EP300 acetyltransferase, genotoxic agents like H(2)O(2) and methyl methanesulfonate (MMS). Acetylation increases its binding affinity to the negative calcium response element (nCaRE) DNA promoter. The acetylated form induces a stronger binding of YBX1 to the Y-box sequence in the MDR1 promoter than the unacetylated form. Deacetylated on lysines. Lys-6 and Lys-7 are deacetylated by SIRT1. Post-translationally, cleaved at Lys-31 by granzyme A to create the mitochondrial form; leading in reduction of binding to DNA, AP endodeoxyribonuclease activity, redox activation of transcription factors and to enhanced cell death. Cleaved by granzyme K; leading to intracellular ROS accumulation and enhanced cell death after oxidative stress. In terms of processing, cys-69 and Cys-93 are nitrosylated in response to nitric oxide (NO) and lead to the exposure of the nuclear export signal (NES). Ubiquitinated by MDM2; leading to translocation to the cytoplasm and proteasomal degradation.

It localises to the nucleus. The protein resides in the nucleolus. The protein localises to the nucleus speckle. Its subcellular location is the endoplasmic reticulum. It is found in the cytoplasm. It localises to the mitochondrion. It catalyses the reaction Exonucleolytic cleavage in the 3'- to 5'-direction to yield nucleoside 5'-phosphates.. With respect to regulation, NPM1 stimulates endodeoxyribonuclease activity on double-stranded DNA with AP sites, but inhibits endoribonuclease activity on single-stranded RNA containing AP sites. Multifunctional protein that plays a central role in the cellular response to oxidative stress. The two major activities of APEX1 are DNA repair and redox regulation of transcriptional factors. Functions as an apurinic/apyrimidinic (AP) endodeoxyribonuclease in the DNA base excision repair (BER) pathway of DNA lesions induced by oxidative and alkylating agents. Initiates repair of AP sites in DNA by catalyzing hydrolytic incision of the phosphodiester backbone immediately adjacent to the damage, generating a single-strand break with 5'-deoxyribose phosphate and 3'-hydroxyl ends. Also incises at AP sites in the DNA strand of DNA/RNA hybrids, single-stranded DNA regions of R-loop structures, and single-stranded RNA molecules. Has 3'-5' exoribonuclease activity on mismatched deoxyribonucleotides at the 3' termini of nicked or gapped DNA molecules during short-patch BER. Possesses DNA 3' phosphodiesterase activity capable of removing lesions (such as phosphoglycolate) blocking the 3' side of DNA strand breaks. May also play a role in the epigenetic regulation of gene expression by participating in DNA demethylation. Acts as a loading factor for POLB onto non-incised AP sites in DNA and stimulates the 5'-terminal deoxyribose 5'-phosphate (dRp) excision activity of POLB. Plays a role in the protection from granzyme-mediated cellular repair leading to cell death. Also involved in the DNA cleavage step of class switch recombination (CSR). On the other hand, APEX1 also exerts reversible nuclear redox activity to regulate DNA binding affinity and transcriptional activity of transcriptional factors by controlling the redox status of their DNA-binding domain, such as the FOS/JUN AP-1 complex after exposure to IR. Involved in calcium-dependent down-regulation of parathyroid hormone (PTH) expression by binding to negative calcium response elements (nCaREs). Together with HNRNPL or the dimer XRCC5/XRCC6, associates with nCaRE, acting as an activator of transcriptional repression. Stimulates the YBX1-mediated MDR1 promoter activity, when acetylated at Lys-6 and Lys-7, leading to drug resistance. Also acts as an endoribonuclease involved in the control of single-stranded RNA metabolism. Plays a role in regulating MYC mRNA turnover by preferentially cleaving in between UA and CA dinucleotides of the MYC coding region determinant (CRD). In association with NMD1, plays a role in the rRNA quality control process during cell cycle progression. Associates, together with YBX1, on the MDR1 promoter. Together with NPM1, associates with rRNA. Binds DNA and RNA. The sequence is that of DNA repair nuclease/redox regulator APEX1 (APEX1) from Gorilla gorilla gorilla (Western lowland gorilla).